The sequence spans 258 residues: Myogenic factor 5 (258 aa).

The tract at residues 21–50 (LSSPEGEFPEDFEPRELPPFGAPAPTEPAC) is disordered. The 52-residue stretch at 85–136 (DRRKAATMRERRRLKKVNQAFETLKRCTTANPNQRLPKVEILRNAIRYIESL) folds into the bHLH domain. The interval 220–258 (AEEPGLPLRHAGSLSPGASIDSGPGTPGSPPPRRTYQAL) is disordered.

As to quaternary structure, efficient DNA binding requires dimerization with another bHLH protein.

It is found in the nucleus. Its function is as follows. Acts as a transcriptional activator that promotes transcription of muscle-specific target genes and plays a role in muscle differentiation. Induces fibroblasts to differentiate into myoblasts. Probable sequence specific DNA-binding protein. This chain is Myogenic factor 5 (MYF5), found in Gallus gallus (Chicken).